A 191-amino-acid polypeptide reads, in one-letter code: MLTETLTMKYTATKFRVRTNKRLRSQKYPEKHSDFLGCSSTKSSFGLNMLLTKPNKFQIPPPHPVLLKRIREERMKLTSSFESGINIIDIETSWEIDKFISHHFNTSIGNVLKSKSSSKKRPMNAFMAFRTYYAQLGTGLKQNTLSVILSEAWNAPETDQNIWDIFAQQFNFASPRCGFVNYIMAHASSAP.

The segment at residues 118–174 (SKKRPMNAFMAFRTYYAQLGTGLKQNTLSVILSEAWNAPETDQNIWDIFAQQFNFAS) is a DNA-binding region (alpha box).

Belongs to the MATALPHA1 family.

Its subcellular location is the nucleus. Functionally, mating type proteins are sequence specific DNA-binding proteins that act as master switches in yeast differentiation by controlling gene expression in a cell type-specific fashion. Transcriptional activator that induces the transcription of alpha-specific genes. The sequence is that of Mating-type-like protein ALPHA1 (MTL1ALPHA1) from Candida glabrata (strain ATCC 2001 / BCRC 20586 / JCM 3761 / NBRC 0622 / NRRL Y-65 / CBS 138) (Yeast).